The chain runs to 251 residues: Triosephosphate isomerase (251 aa).

9-11 contacts substrate; sequence NWK. Residue His96 is the Electrophile of the active site. The active-site Proton acceptor is the Glu167. Residues Gly173, Ser213, and 234–235 contribute to the substrate site; that span reads GG.

Belongs to the triosephosphate isomerase family. In terms of assembly, homodimer.

It localises to the cytoplasm. It carries out the reaction D-glyceraldehyde 3-phosphate = dihydroxyacetone phosphate. It participates in carbohydrate biosynthesis; gluconeogenesis. It functions in the pathway carbohydrate degradation; glycolysis; D-glyceraldehyde 3-phosphate from glycerone phosphate: step 1/1. Its function is as follows. Involved in the gluconeogenesis. Catalyzes stereospecifically the conversion of dihydroxyacetone phosphate (DHAP) to D-glyceraldehyde-3-phosphate (G3P). The sequence is that of Triosephosphate isomerase from Bacteroides fragilis (strain ATCC 25285 / DSM 2151 / CCUG 4856 / JCM 11019 / LMG 10263 / NCTC 9343 / Onslow / VPI 2553 / EN-2).